A 187-amino-acid chain; its full sequence is Orotate phosphoribosyltransferase (187 aa).

110–118 (EDVVTTGGS) lines the 5-phospho-alpha-D-ribose 1-diphosphate pocket. The orotate site is built by Thr114 and Arg142.

It belongs to the purine/pyrimidine phosphoribosyltransferase family. PyrE subfamily. Homodimer. It depends on Mg(2+) as a cofactor.

It carries out the reaction orotidine 5'-phosphate + diphosphate = orotate + 5-phospho-alpha-D-ribose 1-diphosphate. It participates in pyrimidine metabolism; UMP biosynthesis via de novo pathway; UMP from orotate: step 1/2. In terms of biological role, catalyzes the transfer of a ribosyl phosphate group from 5-phosphoribose 1-diphosphate to orotate, leading to the formation of orotidine monophosphate (OMP). In Thermotoga neapolitana (strain ATCC 49049 / DSM 4359 / NBRC 107923 / NS-E), this protein is Orotate phosphoribosyltransferase.